We begin with the raw amino-acid sequence, 142 residues long: Nucleoside diphosphate kinase (142 aa).

ATP contacts are provided by Lys-11, Phe-59, Arg-87, Thr-93, Arg-104, and Asn-114. His-117 (pros-phosphohistidine intermediate) is an active-site residue.

The protein belongs to the NDK family. Homotetramer. The cofactor is Mg(2+).

It localises to the cytoplasm. It carries out the reaction a 2'-deoxyribonucleoside 5'-diphosphate + ATP = a 2'-deoxyribonucleoside 5'-triphosphate + ADP. The catalysed reaction is a ribonucleoside 5'-diphosphate + ATP = a ribonucleoside 5'-triphosphate + ADP. In terms of biological role, major role in the synthesis of nucleoside triphosphates other than ATP. The ATP gamma phosphate is transferred to the NDP beta phosphate via a ping-pong mechanism, using a phosphorylated active-site intermediate. The polypeptide is Nucleoside diphosphate kinase (Salinibacter ruber (strain DSM 13855 / M31)).